Reading from the N-terminus, the 168-residue chain is Mitochondrial inner membrane protein Mpv17 (168 aa).

The next 4 helical transmembrane spans lie at 12–29 (INVAAVMCLGDTISQFFF), 41–61 (RTLRFGIVGLVFVGPTLRRWY), 82–101 (MLVDQTLFAPPFTMAMSFLV), and 144–166 (LGYQVLYAQFIALVWNCYLSMIL).

The protein belongs to the peroxisomal membrane protein PXMP2/4 family. In terms of assembly, part of a larger complex that may be a homohexamer.

Its subcellular location is the mitochondrion inner membrane. Non-selective channel that modulates the membrane potential under normal conditions and oxidative stress, and is involved in mitochondrial homeostasis. Can translocate uridine, but not orotate, across a lipid membrane. Involved in maintenance of mitochondrial ultrastructure. May be involved in mitochondrial DNA (mtDNA) maintenance but does not appear to be directly involved in mitochondrial deoxynucleoside triphosphate (dNTP) pool homeostasis. May be involved in the regulation of reactive oxygen species metabolism and the control of oxidative phosphorylation. The chain is Mitochondrial inner membrane protein Mpv17 from Drosophila melanogaster (Fruit fly).